The chain runs to 1114 residues: Translation initiation factor IF-2 (1114 aa).

Disordered stretches follow at residues 69 to 102 (SIKK…PLLI) and 181 to 507 (INNN…KRRA). A compositionally biased stretch (basic and acidic residues) spans 85–96 (SKKETPLKDNSN). The span at 181–198 (INNNVKSNESSQNISSAG) shows a compositional bias: polar residues. Residues 240–251 (INPNKQNNKQNI) show a composition bias toward low complexity. Positions 252 to 261 (AFKQTGSNRI) are enriched in polar residues. Low complexity-rich tracts occupy residues 262–278 (GSPN…GLRN), 290–309 (NRQG…GLRN), and 321–337 (NRQG…NRPG). The span at 365 to 375 (NSEKDNKDKNN) shows a compositional bias: basic and acidic residues. Positions 376–385 (NAKQNINGPN) are enriched in low complexity. Positions 417 to 431 (GKTDWDDSAKLEALR) are enriched in basic and acidic residues. Residues 489–505 (KQFKKKKKETTRQRQKR) are compositionally biased toward basic residues. Positions 606-778 (RRPPVITVMG…ILLVSEVEDL (173 aa)) constitute a tr-type G domain. Residues 615–622 (GHVDHGKT) are G1. 615 to 622 (GHVDHGKT) serves as a coordination point for GTP. Residues 640-644 (GITQH) are G2. The segment at 665-668 (DTPG) is G3. Residues 665–669 (DTPGH) and 719–722 (NKID) contribute to the GTP site. The segment at 719-722 (NKID) is G4. Residues 755 to 757 (SAI) are G5.

This sequence belongs to the TRAFAC class translation factor GTPase superfamily. Classic translation factor GTPase family. IF-2 subfamily.

The protein resides in the cytoplasm. One of the essential components for the initiation of protein synthesis. Protects formylmethionyl-tRNA from spontaneous hydrolysis and promotes its binding to the 30S ribosomal subunits. Also involved in the hydrolysis of GTP during the formation of the 70S ribosomal complex. The chain is Translation initiation factor IF-2 from Prochlorococcus marinus (strain MIT 9301).